We begin with the raw amino-acid sequence, 616 residues long: Adenylosuccinate synthetase 1 (616 aa).

The segment at 1–27 is disordered; sequence MDKQAERGQSAGPVKTPQGTQPPAHNY. Polar residues predominate over residues 17–27; the sequence is PQGTQPPAHNY. Residues 87–93 and 117–119 contribute to the GTP site; these read GDEGKGK and GHT. The Proton acceptor role is filled by D88. Mg(2+)-binding residues include D88 and G117. IMP is bound by residues 88–91, 115–118, T202, K216, Q328, T343, and K472; these read DEGK and NAGH. The Proton donor role is filled by H118. Substrate is bound at residue 468–474; that stretch reads AVTKKPR. GTP is bound by residues R474 and 603–605; that span reads GNG.

It belongs to the adenylosuccinate synthetase family. As to quaternary structure, homodimer. Mg(2+) is required as a cofactor.

The protein localises to the cytoplasm. It catalyses the reaction IMP + L-aspartate + GTP = N(6)-(1,2-dicarboxyethyl)-AMP + GDP + phosphate + 2 H(+). Its pathway is purine metabolism; AMP biosynthesis via de novo pathway; AMP from IMP: step 1/2. Its function is as follows. Plays an important role in the salvage pathway for purine nucleotide biosynthesis. Catalyzes the first committed step in the biosynthesis of AMP from IMP. The sequence is that of Adenylosuccinate synthetase 1 from Trypanosoma cruzi (strain CL Brener).